A 172-amino-acid chain; its full sequence is uncharacterized protein (172 aa).

In terms of domain architecture, HTH cro/C1-type spans 21-75; sequence FKRILLELGLTLKEFSEISGIPYSTLYKVIQGKDFRVSTLIKILKTIRSFEKDEN. A DNA-binding region (H-T-H motif) is located at residues 32-51; that stretch reads LKEFSEISGIPYSTLYKVIQ.

This is an uncharacterized protein from Methanocaldococcus jannaschii (strain ATCC 43067 / DSM 2661 / JAL-1 / JCM 10045 / NBRC 100440) (Methanococcus jannaschii).